The sequence spans 1024 residues: MNLFNLDRFRFEKRSKIEEAPEAAPQPSQPGPSSPISLSAEEENAEGEVSRANTPDSDVTEKTEDSSVPEPPDNESKASLSCFQNQRTIQEYIDLSSDSEDVSPNCSSTVQEKKFSKDTVIIVSEPSEDEESHDLPSATRRNDISELEDLSELEDLKDAKLQTLKELFPQRSDSDLLKLIDSTSTMDGAIAAALLKFGDAGGGPRKRKLSSSSEAYEEDEANDDQSLKKPRGDRREESNESAEASSNWEKQESIVLKLQKEFPNFDKQELREVLKEHEWMYTEALESLKVFAEDQDVQCASQSEVTNGKEVARNQNYSKNAAKIKMKQKISMKPQNGFNKKRKKNVFNPKKAVEDSEYDSGSDAGSSLDEDYSSCEEVMEDGYKGKILHFLQDASIGELTLIPKCSQKKAQKIIELRPFNNWETLFTKMSKINGLSEDLIWNCKTVIQERDVVIRLMNKCEDISNKLTKQVTMLTGNGGGWNIEQPSLLNQSLSLKPYQKVGLNWLALVHKHGLNGILADEMGLGKTIQAIAFLAYLFQEGNKGPHLIVVPASTIDNWLREVNLWCPTLNVLCYYGSQEERKQIRFNIHNKYEDYNVIVTTYNCAISSSDDRSLFRRLKLNYAIFDEGHMLKNMGSIRYQHLMTINARNRLLLTGTPVQNNLLELMSLLNFVMPHMFSSSTSEIRRMFSSKTKPADEQSIYEKERIAHAKQIIKPFILRRVKEEVLKLLPPKKDQIELCAMSEKQEQLYSGLFNRLKKSINNLEKNTEMCNVMMQLRKMANHPLLHRQYYTAEKLKEMSQLMLKEPTHCEANPDLIFEDMEVMTDFELHVLCKQYQHINSYQLDMDLILDSGKFRTLGCILSELKQKGDRVVLFSQFTMMLDILEVLLKHHQHRYLRLDGKTQISERIHLIDEFNTDMDIFVFLLSTKAGGLGINLTSANVVILHDIDCNPYNDKQAEDRCHRVGQTKEVLVIKLISQGTIEESMLKINQQKLKLEQDMTTVDEADEGSMPADIATLLKTSMGL.

N-acetylmethionine is present on Met-1. The disordered stretch occupies residues 1-83 (MNLFNLDRFR…NESKASLSCF (83 aa)). Basic and acidic residues predominate over residues 7 to 19 (DRFRFEKRSKIEE). The residue at position 54 (Thr-54) is a Phosphothreonine. Ser-57 bears the Phosphoserine mark. A Glycyl lysine isopeptide (Lys-Gly) (interchain with G-Cter in SUMO2) cross-link involves residue Lys-77. Residues Ser-79, Ser-124, Ser-127, Ser-132, Ser-145, and Ser-151 each carry the phosphoserine modification. The region spanning 156–198 (LKDAKLQTLKELFPQRSDSDLLKLIDSTSTMDGAIAAALLKFG) is the CUE 1 domain. The interval 201 to 250 (GGGPRKRKLSSSSEAYEEDEANDDQSLKKPRGDRREESNESAEASSNWEK) is disordered. A phosphoserine mark is found at Ser-210 and Ser-213. Tyr-216 bears the Phosphotyrosine mark. Ser-238 and Ser-241 each carry phosphoserine. The CUE 2 domain occupies 250–293 (KQESIVLKLQKEFPNFDKQELREVLKEHEWMYTEALESLKVFAE). The residue at position 301 (Ser-301) is a Phosphoserine. The tract at residues 331-369 (SMKPQNGFNKKRKKNVFNPKKAVEDSEYDSGSDAGSSLD) is disordered. Glycyl lysine isopeptide (Lys-Gly) (interchain with G-Cter in SUMO2) cross-links involve residues Lys-333 and Lys-469. Residues 507-675 (ALVHKHGLNG…MSLLNFVMPH (169 aa)) enclose the Helicase ATP-binding domain. ATP is bound at residue 519–527 (ADEMGLGKT). Residues 626–629 (DEGH) carry the DEGH box motif. A Nuclear localization signal motif is present at residues 719-736 (RRVKEEVLKLLPPKKDQI). Lys-722 participates in a covalent cross-link: Glycyl lysine isopeptide (Lys-Gly) (interchain with G-Cter in SUMO2). Residues 856 to 1008 (TLGCILSELK…MTTVDEADEG (153 aa)) enclose the Helicase C-terminal domain. 895-902 (YLRLDGKT) contributes to the ATP binding site. Lys-994 participates in a covalent cross-link: Glycyl lysine isopeptide (Lys-Gly) (interchain with G-Cter in SUMO2). The DEAD box signature appears at 1003–1006 (DEAD).

The protein belongs to the SNF2/RAD54 helicase family. In terms of assembly, binds to DNA preferentially in the vicinity of transcriptional start sites. Interacts with MSH2 and TRIM28. Part of a complex composed of TRIM28, HDAC1, HDAC2 and EHMT2. Interacts with PCNA.

It localises to the nucleus. It is found in the chromosome. The catalysed reaction is ATP + H2O = ADP + phosphate + H(+). Functionally, DNA helicase that possesses intrinsic ATP-dependent nucleosome-remodeling activity and is both required for DNA repair and heterochromatin organization. Promotes DNA end resection of double-strand breaks (DSBs) following DNA damage: probably acts by weakening histone DNA interactions in nucleosomes flanking DSBs. Required for the restoration of heterochromatin organization after replication. Acts at replication sites to facilitate the maintenance of heterochromatin by directing H3 and H4 histones deacetylation, H3 'Lys-9' trimethylation (H3K9me3) and restoration of silencing. This chain is SWI/SNF-related matrix-associated actin-dependent regulator of chromatin subfamily A containing DEAD/H box 1 (Smarcad1), found in Rattus norvegicus (Rat).